The sequence spans 416 residues: UDP-N-acetylglucosamine 1-carboxyvinyltransferase (416 aa).

22-23 (KN) provides a ligand contact to phosphoenolpyruvate. Arginine 92 provides a ligand contact to UDP-N-acetyl-alpha-D-glucosamine. The active-site Proton donor is cysteine 116. Residue cysteine 116 is modified to 2-(S-cysteinyl)pyruvic acid O-phosphothioketal. UDP-N-acetyl-alpha-D-glucosamine-binding positions include 121 to 125 (RPVDQ), aspartate 304, and isoleucine 326.

Belongs to the EPSP synthase family. MurA subfamily.

Its subcellular location is the cytoplasm. It catalyses the reaction phosphoenolpyruvate + UDP-N-acetyl-alpha-D-glucosamine = UDP-N-acetyl-3-O-(1-carboxyvinyl)-alpha-D-glucosamine + phosphate. It functions in the pathway cell wall biogenesis; peptidoglycan biosynthesis. Cell wall formation. Adds enolpyruvyl to UDP-N-acetylglucosamine. In Cupriavidus taiwanensis (strain DSM 17343 / BCRC 17206 / CCUG 44338 / CIP 107171 / LMG 19424 / R1) (Ralstonia taiwanensis (strain LMG 19424)), this protein is UDP-N-acetylglucosamine 1-carboxyvinyltransferase.